A 256-amino-acid polypeptide reads, in one-letter code: CCAAT/enhancer-binding protein delta (256 aa).

N-acetylserine is present on S2. Disordered regions lie at residues 18–40 (TAEP…AEPA), 92–121 (GGPA…APGS), and 139–206 (AAAQ…NQEM). K108 participates in a covalent cross-link: Glycyl lysine isopeptide (Lys-Gly) (interchain with G-Cter in SUMO). A compositionally biased stretch (pro residues) spans 143 to 162 (PTPPASPEPPRRSPAPPAPG). Residues 164–188 (ARDKAAGKRGPDRGSPEYRQRRERN) are compositionally biased toward basic and acidic residues. Residues 178–241 (SPEYRQRRER…AGLRRFFKQL (64 aa)) enclose the bZIP domain. The segment at 182–209 (RQRRERNNIAVRKSRDKAKRRNQEMQQK) is basic motif. The tract at residues 213 to 241 (LSAENEKLQQRVEQLTRDLAGLRRFFKQL) is leucine-zipper.

It belongs to the bZIP family. C/EBP subfamily. As to quaternary structure, binds DNA as a homodimer and as a heterodimer. Can form stable heterodimers with CEBPB. Can form stable heterodimers with CEBPA and CEBPE. Directly interacts with SPI1/PU.1; this interaction does not affect DNA-binding properties of each partner. Interacts with PRDM16.

The protein resides in the nucleus. Functionally, transcription activator that recognizes two different DNA motifs: the CCAAT homology common to many promoters and the enhanced core homology common to many enhancers. Important transcription factor regulating the expression of genes involved in immune and inflammatory responses. Transcriptional activator that enhances IL6 transcription alone and as heterodimer with CEBPB. The polypeptide is CCAAT/enhancer-binding protein delta (CEBPD) (Bos taurus (Bovine)).